The sequence spans 150 residues: SsrA-binding protein (150 aa).

Residues 129–150 (KRQTLKSKEADREMARALRDRH) form a disordered region.

This sequence belongs to the SmpB family.

Its subcellular location is the cytoplasm. In terms of biological role, required for rescue of stalled ribosomes mediated by trans-translation. Binds to transfer-messenger RNA (tmRNA), required for stable association of tmRNA with ribosomes. tmRNA and SmpB together mimic tRNA shape, replacing the anticodon stem-loop with SmpB. tmRNA is encoded by the ssrA gene; the 2 termini fold to resemble tRNA(Ala) and it encodes a 'tag peptide', a short internal open reading frame. During trans-translation Ala-aminoacylated tmRNA acts like a tRNA, entering the A-site of stalled ribosomes, displacing the stalled mRNA. The ribosome then switches to translate the ORF on the tmRNA; the nascent peptide is terminated with the 'tag peptide' encoded by the tmRNA and targeted for degradation. The ribosome is freed to recommence translation, which seems to be the essential function of trans-translation. This Syntrophotalea carbinolica (strain DSM 2380 / NBRC 103641 / GraBd1) (Pelobacter carbinolicus) protein is SsrA-binding protein.